The primary structure comprises 553 residues: Putative transport protein YidE (553 aa).

Helical transmembrane passes span 4 to 24 (IALTVSILALVAVVGLFIGNV), 28 to 48 (GIGLGIGGVLFGGIIVGHFVS), 65 to 85 (FGLILFVYTIGIQVGPGFFAS), 95 to 115 (LFAVLIVIIGGLVTAILHKLF), and 158 to 178 (MSYAMAYPFGICGILFTMWML). RCK C-terminal domains follow at residues 191 to 276 (QQHE…VIGQ) and 279 to 361 (DTSL…VLGN). 6 consecutive transmembrane segments (helical) span residues 371–391 (MLPVFIGIGLGVLLGSIPVFV), 393–413 (GFPAALKLGLAGGPLIMALIL), 439–459 (IVLFLSIVGLKSGGDFVNTLV), 464–484 (LSWIGYGALITAVPLITVGIL), 493–513 (YLTMCGMLAGSMTDPPALAFA), and 533–553 (LVMFLRIITPQLLAVLFWSIG).

It belongs to the AAE transporter (TC 2.A.81) family. YidE subfamily.

It is found in the cell membrane. This Shigella flexneri serotype 5b (strain 8401) protein is Putative transport protein YidE.